The primary structure comprises 1350 residues: 1-phosphatidylinositol 4,5-bisphosphate phosphodiesterase gamma plc-3 (1350 aa).

The disordered stretch occupies residues 1-40 (MQHGSLGPSSSSRKTTVTSTAGSVHLHHRSSNGFSTASRA). Over residues 9 to 20 (SSSSRKTTVTST) the composition is skewed to low complexity. The span at 31-40 (SNGFSTASRA) shows a compositional bias: polar residues. Residues 352–503 (HDMSRPLSHY…LKKKIIVKHK (152 aa)) form the PI-PLC X-box domain. Active-site residues include His-367 and His-419. Residues 570–594 (NPNDDTVSVSGDEEREEETPSGFGV) form a disordered region. SH2 domains are found at residues 605–704 (WFHG…TIPC) and 715–804 (WFSA…RFPV). One can recognise an SH3 domain in the interval 832 to 890 (DKEVQARALRPYRGTADDELSFPANVIITVLRKEEGLWRGRYGSLTGWFPSAHVQEILP). The 106-residue stretch at 855 to 960 (ANVIITVLRK…WQNNLFELTR (106 aa)) folds into the PH domain. The PI-PLC Y-box domain maps to 982–1092 (LSNLVVYCQA…CGYLLKPDYM (111 aa)). Positions 1099 to 1220 (PTNTEKFATA…CGFRSVPLKN (122 aa)) constitute a C2 domain. Residues 1270–1350 (GDSIPREMAP…KFSFGKSSKS (81 aa)) form a disordered region. A compositionally biased stretch (polar residues) spans 1283 to 1329 (TSATDRSLDSPTNSESRATLLSGQRGSQDSMDSAAETSSIASGTISS). The span at 1340 to 1350 (KKFSFGKSSKS) shows a compositional bias: low complexity.

Ca(2+) serves as cofactor. In terms of tissue distribution, expressed in intestine, isthmus of the pharynx, proximal gonad sheath cells, spermatheca and uterine sheath cells. In males, expressed in the valve cell, the vas deferens and retractor and ventral protactor muscles.

The catalysed reaction is a 1,2-diacyl-sn-glycero-3-phospho-(1D-myo-inositol-4,5-bisphosphate) + H2O = 1D-myo-inositol 1,4,5-trisphosphate + a 1,2-diacyl-sn-glycerol + H(+). Functionally, mediates the production of the second messenger molecules diacylglycerol (DAG) and inositol 1,4,5-trisphosphate (IP3) which plays an important role in the regulation of intracellular signaling cascades. Regulates basal and ovulatory sheath cell contractions by controlling Ca(2+) oscillations via IP3-mediated activation of IP3 receptor itr-1. In intestinal epithelial cells, regulates Ca(2+) oscillations which control posterior body wall muscle contractions required for defecation by IP3-mediated activation of itr-1 and probably by activating TRPM channels gon-2 and gtl-1 by reducing PIP2 levels. By activating tpa-1 via DAG production, required for the expression of antimicrobial peptide nlp-29 in the epidermis in response to fungal infection or physical injury. By triggering Ca(2+) transient via IP3-mediated activation of IPR3 receptor itr-1 in ASH sensory neurons, involved in avoidance behavior in response to nose touch. Probably by regulating neuronal transmission in ALA neurons, mediates the decrease in pharyngeal pumping and locomotion during the quiescent state that precedes each larval molt, downstream of lin-3 and receptor let-23 and upstream of tpa-1 but not itr-1. During embryogenesis, may play an role in epidermal morphogenesis together with plc-1. Probably downstream of receptor daf-2, regulates male-sex muscle excitability in the absence of food. The chain is 1-phosphatidylinositol 4,5-bisphosphate phosphodiesterase gamma plc-3 from Caenorhabditis elegans.